A 132-amino-acid chain; its full sequence is UPF0357 protein YCL012C (132 aa).

The N-terminal stretch at 1-25 (MWDLFYFKVFFWVVLISLCIFMVHR) is a signal peptide.

This sequence belongs to the UPF0357 family.

This is UPF0357 protein YCL012C (YCL012C) from Saccharomyces bayanus (Yeast).